Reading from the N-terminus, the 76-residue chain is Serine palmitoyltransferase small subunit B (76 aa).

The Cytoplasmic segment spans residues 1–11 (MDFKRVKEYFA). Residues 12–29 (WLYYQYQIITCCAVMEPW) traverse the membrane as a helical segment. The Lumenal portion of the chain corresponds to 30-36 (EQSMLNT). Residues 37–57 (IILTIVAMVVYTAYVFIPIHI) form a helical membrane-spanning segment. The Cytoplasmic segment spans residues 58–76 (RLAWEFFSKICGYDSSISN).

This sequence belongs to the SPTSS family. SPTSSB subfamily. In terms of assembly, component of the serine palmitoyltransferase (SPT) complex, which is composed of SPTLC1, SPTLC2 or SPTLC3 and SPTSSA or SPTSSB. The heterodimer consisting of SPTLC1 and SPTLC2/SPTLC3 forms the catalytic core of the enzyme, while SPTSSA or SPTSSB subunits determine substrate specificity. SPT also interacts with ORMDL proteins, especially ORMDL3, which negatively regulate SPT activity in the presence of ceramides. In terms of tissue distribution, expression is strong in hypogonadal (hpg) mouse prostate, weak in mature castrated mouse prostate and absent in normal intact or androgen-replaced hpg mouse prostates.

It is found in the endoplasmic reticulum membrane. It participates in lipid metabolism; sphingolipid metabolism. Its function is as follows. Component of the serine palmitoyltransferase multisubunit enzyme (SPT) that catalyzes the initial and rate-limiting step in sphingolipid biosynthesis by condensing L-serine and activated acyl-CoA (most commonly palmitoyl-CoA) to form long-chain bases. The SPT complex is composed of SPTLC1, SPTLC2 or SPTLC3 and SPTSSA or SPTSSB. Within this complex, the heterodimer consisting of SPTLC1 and SPTLC2/SPTLC3 forms the catalytic core. Within the SPT complex, SPTSSB stimulates the catalytic activity and plays a role in substrate specificity. SPT complexes with this subunit showing a preference for longer acyl-CoAs. The SPTLC1-SPTLC2-SPTSSB complex shows a strong preference for C18-CoA substrate, while the SPTLC1-SPTLC3-SPTSSB isozyme displays an ability to use a broader range of acyl-CoAs, without apparent preference. The polypeptide is Serine palmitoyltransferase small subunit B (Sptssb) (Mus musculus (Mouse)).